The following is a 377-amino-acid chain: MVELNLNHIYKKYPNSSHYSVEDFDLDIKNKEFIVFVGPSGCGKSTTLRMVAGLEDITKGELKIDGEVVNDKAPKDRDIAMVFQNYALYPHMSVYDNMAFGLKLRHYSKEAIDKRVKEAAQILGLTEFLERKPADLSGGQRQRVAMGRAIVRDAKVFLMDEPLSNLDAKLRVSMRAEIAKIHRRIGATTIYVTHDQTEAMTLADRIVIMSSTKNEDGSGTIGRVEQVGTPQELYNRPANKFVAGFIGSPAMNFFDVTIKDGHLVSKDGLTIAVTEGQLKMLESKGFKNKNLIFGIRPEDISSSLLVQETYPDATVDAEVVVSELLGSETMLYLKLGQTEFAARVDARDFHEPGEKVSLTFNVAKGHFFDAETEAAIR.

One can recognise an ABC transporter domain in the interval 4–246 (LNLNHIYKKY…PANKFVAGFI (243 aa)). An ATP-binding site is contributed by 38-45 (GPSGCGKS).

Belongs to the ABC transporter superfamily.

The protein localises to the cell membrane. Functionally, involved in a binding protein-dependent transport system responsible for the uptake of melibiose, raffinose and isomaltotriose. Probably responsible for energy coupling to the transport system. The chain is Multiple sugar-binding transport ATP-binding protein MsmK (msmK) from Streptococcus mutans serotype c (strain ATCC 700610 / UA159).